The primary structure comprises 149 residues: Putative prefoldin subunit alpha (149 aa).

Belongs to the prefoldin subunit alpha family.

Its subcellular location is the cytoplasm. Functionally, molecular chaperone capable of stabilizing a range of proteins. This Aquifex aeolicus (strain VF5) protein is Putative prefoldin subunit alpha.